The sequence spans 389 residues: Chalcone synthase 4-2 (389 aa).

Cys164 is an active-site residue.

It belongs to the thiolase-like superfamily. Chalcone/stilbene synthases family.

The enzyme catalyses (E)-4-coumaroyl-CoA + 3 malonyl-CoA + 3 H(+) = 2',4,4',6'-tetrahydroxychalcone + 3 CO2 + 4 CoA. The protein operates within secondary metabolite biosynthesis; flavonoid biosynthesis. In terms of biological role, the primary product of this enzyme is 4,2',4',6'-tetrahydroxychalcone (also termed naringenin-chalcone or chalcone) which can under specific conditions spontaneously isomerize into naringenin. The polypeptide is Chalcone synthase 4-2 (CHS4-2) (Medicago sativa (Alfalfa)).